Here is a 410-residue protein sequence, read N- to C-terminus: Acyl-CoA-binding domain-containing protein 5-B (410 aa).

An ACB domain is found at 12 to 101 (AQKRFEAAVK…IQLIIETLPV (90 aa)). Residues 23–32 (IRSLPEDGSY), 43–47 (YSYYK), Lys-69, and Tyr-88 contribute to the an acyl-CoA site. Residues 119 to 128 (VEDDDDDDDE) are compositionally biased toward acidic residues. Disordered regions lie at residues 119-165 (VEDD…LDDY), 221-242 (SDDE…GSGV), and 254-320 (GANM…DRMD). The stretch at 326 to 355 (TQITTILSELEDNMQDVLRRLTTLEQLTAS) forms a coiled coil. Positions 382-404 (SPFTAVLTVLWPFAVHWLVQFYL) form a transmembrane segment.

The protein localises to the membrane. Its function is as follows. Binds medium- and long-chain acyl-CoA esters. The chain is Acyl-CoA-binding domain-containing protein 5-B (acbd5b) from Danio rerio (Zebrafish).